The sequence spans 478 residues: Putrescine oxidase (478 aa).

Residue 15–70 (RDVVVVGAGPAGLMAARTLVAAGRTVAVLEARDRVGGRTWSKTVDGAFLEIGGQWI) participates in FAD binding.

This sequence belongs to the flavin monoamine oxidase family. Requires FAD as cofactor.

The catalysed reaction is putrescine + O2 + H2O = 4-aminobutanal + H2O2 + NH4(+). The chain is Putrescine oxidase (puo) from Kocuria rosea (Deinococcus erythromyxa).